The sequence spans 1333 residues: Elongator complex protein 1 (1333 aa).

Serine 805, serine 1172, and serine 1175 each carry phosphoserine. Residues 886-1333 (VDVNELFNHS…RSQWKLSLLE (448 aa)) are mediates dimerization. A disordered region spans residues 1175 to 1209 (SGSEMSGRYSHSNSRISARSSKNRRKAERKKHSLK). A required for binding to tRNA region spans residues 1192-1210 (ARSSKNRRKAERKKHSLKE). A compositionally biased stretch (basic residues) spans 1195-1207 (SKNRRKAERKKHS).

This sequence belongs to the ELP1/IKA1 family. As to quaternary structure, homodimer; dimerization promotes ELP1 stability and elongator complex formation. Component of the elongator complex which consists of ELP1, ELP2, ELP3, ELP4, ELP5 and ELP6. Interacts preferentially with MAP3K14/NIK followed by IKK-alpha and IKK-beta. Post-translationally, phosphorylated. As to expression, in the testis, expression is restricted to germ cells during spermatogenesis with no expression detected in somatic cells such as Sertoli cells or Leydig cells (at protein level). In the ovary, expressed in oocytes of primary, secondary and antral follicles (at protein level). Widely expressed in adult tissues with highest levels in brain and also expressed at all embryonic stages.

It localises to the cytoplasm. The protein resides in the nucleus. Its pathway is tRNA modification; 5-methoxycarbonylmethyl-2-thiouridine-tRNA biosynthesis. Its function is as follows. Component of the elongator complex which is required for multiple tRNA modifications, including mcm5U (5-methoxycarbonylmethyl uridine), mcm5s2U (5-methoxycarbonylmethyl-2-thiouridine), and ncm5U (5-carbamoylmethyl uridine). The elongator complex catalyzes the formation of carboxymethyluridine in the wobble base at position 34 in tRNAs. Regulates the migration and branching of projection neurons in the developing cerebral cortex, through a process depending on alpha-tubulin acetylation. ELP1 binds to tRNA, mediating interaction of the elongator complex with tRNA. May act as a scaffold protein that assembles active IKK-MAP3K14 complexes (IKKA, IKKB and MAP3K14/NIK). In Mus musculus (Mouse), this protein is Elongator complex protein 1 (Elp1).